The primary structure comprises 72 residues: Prokaryotic ubiquitin-like protein Pup (72 aa).

Over residues 1–11 (MAQRDTGGGQQ) the composition is skewed to gly residues. The disordered stretch occupies residues 1–41 (MAQRDTGGGQQRTGRRDDETAEAEVEESGASDLKERHEKLS). Residues 19–29 (ETAEAEVEESG) are compositionally biased toward acidic residues. The stretch at 22 to 61 (EAEVEESGASDLKERHEKLSEDVDSLLDEIDDVLEENAEE) forms a coiled coil. Positions 28–66 (SGASDLKERHEKLSEDVDSLLDEIDDVLEENAEEFVKGY) are ARC ATPase binding. The span at 32-41 (DLKERHEKLS) shows a compositional bias: basic and acidic residues. At Gln-72 the chain carries Deamidated glutamine. An Isoglutamyl lysine isopeptide (Gln-Lys) (interchain with K-? in acceptor proteins) cross-link involves residue Gln-72.

Belongs to the prokaryotic ubiquitin-like protein family. Strongly interacts with the proteasome-associated ATPase ARC through a hydrophobic interface; the interacting region of Pup lies in its C-terminal half. There is one Pup binding site per ARC hexamer ring. Is modified by deamidation of its C-terminal glutamine to glutamate by the deamidase Dop, a prerequisite to the subsequent pupylation process.

Its pathway is protein degradation; proteasomal Pup-dependent pathway. In terms of biological role, protein modifier that is covalently attached to lysine residues of substrate proteins, thereby targeting them for proteasomal degradation. The tagging system is termed pupylation. This Parafrankia sp. (strain EAN1pec) protein is Prokaryotic ubiquitin-like protein Pup.